Here is a 282-residue protein sequence, read N- to C-terminus: Putative 4-diphosphocytidyl-2-C-methyl-D-erythritol kinase (282 aa).

Residue lysine 9 is part of the active site. Proline 93 to alanine 103 serves as a coordination point for ATP. Aspartate 135 is an active-site residue.

Belongs to the GHMP kinase family. IspE subfamily.

The enzyme catalyses 4-CDP-2-C-methyl-D-erythritol + ATP = 4-CDP-2-C-methyl-D-erythritol 2-phosphate + ADP + H(+). Catalyzes the phosphorylation of the position 2 hydroxy group of 4-diphosphocytidyl-2C-methyl-D-erythritol. This Staphylococcus aureus (strain MSSA476) protein is Putative 4-diphosphocytidyl-2-C-methyl-D-erythritol kinase.